The chain runs to 312 residues: Small ribosomal subunit protein uS2 (312 aa).

It belongs to the universal ribosomal protein uS2 family.

This is Small ribosomal subunit protein uS2 from Ruthia magnifica subsp. Calyptogena magnifica.